The primary structure comprises 92 residues: Mitochondrial import inner membrane translocase subunit tim8 (92 aa).

A Twin CX3C motif motif is present at residues C43–C68. 2 disulfide bridges follow: C43–C68 and C47–C64.

Belongs to the small Tim family. Heterohexamer; composed of 3 copies of tim8 and 3 copies of tim13, named soluble 70 kDa complex. Associates with the TIM22 complex, whose core is composed of tim22 and tim54. Interacts with the transmembrane regions of multi-pass transmembrane proteins in transit.

The protein localises to the mitochondrion inner membrane. Its function is as follows. Mitochondrial intermembrane chaperone that participates in the import and insertion of some multi-pass transmembrane proteins into the mitochondrial inner membrane. Also required for the transfer of beta-barrel precursors from the TOM complex to the sorting and assembly machinery (SAM complex) of the outer membrane. Acts as a chaperone-like protein that protects the hydrophobic precursors from aggregation and guide them through the mitochondrial intermembrane space. The tim8-tim13 complex is non essential and only mediates the import of few proteins, while the predominant tim9-tim10 70 kDa complex is crucial and mediates the import of much more proteins. The protein is Mitochondrial import inner membrane translocase subunit tim8 (tim8) of Neurospora crassa (strain ATCC 24698 / 74-OR23-1A / CBS 708.71 / DSM 1257 / FGSC 987).